A 202-amino-acid chain; its full sequence is Transcription factor IBH1 (202 aa).

Pro residues predominate over residues 1 to 16 (MDAKRTPPPPTPPNPN). The segment at 1–33 (MDAKRTPPPPTPPNPNPSVIGSGAAADGGGFGR) is disordered. One can recognise a bHLH domain in the interval 136 to 185 (TSAAARAVPPPPRQQGEPPRAEALRRLVPGGAGMEYSSLLEETADYLRSL).

The protein belongs to the bHLH protein family. In terms of assembly, interacts with ILI1. Binds to ILI5/BUL1 and BC1. Interacts with BCL1 and BCL2. In terms of tissue distribution, highly expressed in roots and at lower levels in leaf blades, leaf sheaths, lamina joint, stems and panicles.

Functionally, atypical and probable non DNA-binding bHLH transcription factor that acts as a negative regulator of cell elongation and plant development. Binds the transcription factor ILI1 and forms a heterodimer of antagonistic bHLH transcription factors that function downstream of BZR1 to mediate brassinosteroid regulation of cell elongation and lamina inclination. This is Transcription factor IBH1 from Oryza sativa subsp. japonica (Rice).